Reading from the N-terminus, the 459-residue chain is Cysteine--tRNA ligase (459 aa).

Cys-28 contacts Zn(2+). The short motif at 30–40 (ITVYDLCHVGH) is the 'HIGH' region element. The Zn(2+) site is built by Cys-209, His-234, and Glu-238. Residues 266 to 270 (KMSKS) carry the 'KMSKS' region motif. Residue Lys-269 coordinates ATP.

It belongs to the class-I aminoacyl-tRNA synthetase family. As to quaternary structure, monomer. Zn(2+) is required as a cofactor.

The protein localises to the cytoplasm. It carries out the reaction tRNA(Cys) + L-cysteine + ATP = L-cysteinyl-tRNA(Cys) + AMP + diphosphate. This Pasteurella multocida (strain Pm70) protein is Cysteine--tRNA ligase (cysS).